The chain runs to 432 residues: Trigger factor (432 aa).

The PPIase FKBP-type domain maps to 161-246 (EDRVTIDFTG…LKKVEERELP (86 aa)).

Belongs to the FKBP-type PPIase family. Tig subfamily.

Its subcellular location is the cytoplasm. It catalyses the reaction [protein]-peptidylproline (omega=180) = [protein]-peptidylproline (omega=0). Functionally, involved in protein export. Acts as a chaperone by maintaining the newly synthesized protein in an open conformation. Functions as a peptidyl-prolyl cis-trans isomerase. This Citrobacter koseri (strain ATCC BAA-895 / CDC 4225-83 / SGSC4696) protein is Trigger factor.